We begin with the raw amino-acid sequence, 713 residues long: Undecaprenyl-diphosphooligosaccharide--protein glycotransferase (713 aa).

The Cytoplasmic segment spans residues 1 to 11 (MLKKEYLKNPY). A helical membrane pass occupies residues 12 to 35 (LVLFAMIVLAYVFSVFCRFYWVWW). The Periplasmic segment spans residues 36-96 (ASEFNEYFFN…YWLYKITPFS (61 aa)). A DXD motif 1 motif is present at residues 52 to 54 (SND). A Mn(2+)-binding site is contributed by Asp54. Residues 97 to 122 (FESIILYMSTFLSSLVVIPIILLANE) traverse the membrane as a helical segment. The Cytoplasmic segment spans residues 123–125 (YKR). The helical transmembrane segment at 126 to 144 (PLMGFVAALLASVANSYYN) threads the bilayer. Residues 145–152 (RTMSGYYD) lie on the Periplasmic side of the membrane. Position 152 (Asp152) interacts with Mn(2+). A DXD motif 2 motif is present at residues 152–154 (DTD). Residues 153–174 (TDMLVIVLPMFILFFMVRMILK) form a helical membrane-spanning segment. Residues 175–176 (KD) lie on the Cytoplasmic side of the membrane. Residues 177–192 (FFSLIALPLFIGIYLW) form a helical membrane-spanning segment. At 193-197 (WYPSS) the chain is on the periplasmic side. 194–196 (YPS) contacts [alpha-D-GalNAc-(1-&gt;4)]2-[beta-D-Glc-(1-&gt;3)]-[alpha-D-GalNAc-(1-&gt;4)]2-alpha-D-GalNAc-(1-&gt;3)-alpha-D-diNAcBac-tri-trans,hepta-cis-undecaprenyl diphosphate. Residues 198-215 (YTLNVALIGLFLIYTLIF) traverse the membrane as a helical segment. At 216 to 220 (HRKEK) the chain is on the cytoplasmic side. The helical transmembrane segment at 221–233 (IFYIAVILSSLTL) threads the bilayer. Residues 234–237 (SNIA) lie on the Periplasmic side of the membrane. Residues 238-254 (WFYQSAIIVILFALFAL) form a helical membrane-spanning segment. At 255–260 (EQKRLN) the chain is on the cytoplasmic side. The chain crosses the membrane as a helical span at residues 261–278 (FMIIGILGSATLIFLILS). At 279–324 (GGVDPILYQLKFYIFRSDESANLTQGFMYFNVNQTIQEVENVDFSE) the chain is on the periplasmic side. Position 291 (Tyr291) interacts with [alpha-D-GalNAc-(1-&gt;4)]2-[beta-D-Glc-(1-&gt;3)]-[alpha-D-GalNAc-(1-&gt;4)]2-alpha-D-GalNAc-(1-&gt;3)-alpha-D-diNAcBac-tri-trans,hepta-cis-undecaprenyl diphosphate. The short motif at 313–316 (TIQE) is the TIXE motif element. Glu316 contributes to the Mn(2+) binding site. Residues 325 to 347 (FMRRISGSEIVFLFSLFGFVWLL) form a helical membrane-spanning segment. Topologically, residues 348-352 (RKHKS) are cytoplasmic. Residues 353-369 (MIMALPILVLGFLALKG) traverse the membrane as a helical segment. The Periplasmic portion of the chain corresponds to 370–373 (GLRF). Arg372 contacts [alpha-D-GalNAc-(1-&gt;4)]2-[beta-D-Glc-(1-&gt;3)]-[alpha-D-GalNAc-(1-&gt;4)]2-alpha-D-GalNAc-(1-&gt;3)-alpha-D-diNAcBac-tri-trans,hepta-cis-undecaprenyl diphosphate. Residues 374-396 (TIYSVPVMALGFGFLLSEFKAIL) traverse the membrane as a helical segment. At 397-406 (VKKYSQLTSN) the chain is on the cytoplasmic side. A helical membrane pass occupies residues 407 to 427 (VCIVFATILTLAPVFIHIYNY). Topologically, residues 428 to 713 (KAPTVFSQNE…RDAKVFKLKI (286 aa)) are periplasmic. The interacts with target acceptor peptide in protein substrate stretch occupies residues 457–459 (WWD). The short motif at 457 to 461 (WWDYG) is the WWDYG motif element. Position 462 (Tyr462) interacts with [alpha-D-GalNAc-(1-&gt;4)]2-[beta-D-Glc-(1-&gt;3)]-[alpha-D-GalNAc-(1-&gt;4)]2-alpha-D-GalNAc-(1-&gt;3)-alpha-D-diNAcBac-tri-trans,hepta-cis-undecaprenyl diphosphate. Residue Asn534 is glycosylated (N-linked (DATDGlc) asparagine). The MI motif motif lies at 568 to 575 (MSLIFSTV).

It belongs to the STT3 family. It depends on Mg(2+) as a cofactor. Requires Mn(2+) as cofactor.

It localises to the cell inner membrane. It catalyses the reaction tritrans,heptacis-undecaprenyl diphosphooligosaccharide + [protein]-L-asparagine = tritrans,heptacis-undecaprenyl diphosphate + a glycoprotein with the oligosaccharide chain attached by N-beta-D-glycosyl linkage to protein L-asparagine.. It functions in the pathway protein modification; protein glycosylation. Its function is as follows. Oligosaccharyl transferase (OST) that catalyzes the initial transfer of a defined glycan (GalNAc(2)GlcGalNAc(3)Bac(NAc)(2) in eubacteria, where Bac(NAc)(2) is di-N-acetyl bacillosamine) from the lipid carrier undecaprenol-pyrophosphate to an asparagine residue within an Asp/Glu-Asn-X-Ser/Thr consensus motif in nascent polypeptide chains, the first step in protein N-glycosylation. The protein is Undecaprenyl-diphosphooligosaccharide--protein glycotransferase (pglB) of Campylobacter jejuni subsp. jejuni serotype O:2 (strain ATCC 700819 / NCTC 11168).